A 523-amino-acid polypeptide reads, in one-letter code: GMP synthase [glutamine-hydrolyzing] (523 aa).

A Glutamine amidotransferase type-1 domain is found at K8 to K205. The active-site Nucleophile is C85. Active-site residues include H179 and E181. Residues W206–R398 enclose the GMPS ATP-PPase domain. Residue S233–S239 participates in ATP binding.

In terms of assembly, homodimer.

It catalyses the reaction XMP + L-glutamine + ATP + H2O = GMP + L-glutamate + AMP + diphosphate + 2 H(+). It participates in purine metabolism; GMP biosynthesis; GMP from XMP (L-Gln route): step 1/1. Functionally, catalyzes the synthesis of GMP from XMP. The protein is GMP synthase [glutamine-hydrolyzing] of Actinobacillus pleuropneumoniae serotype 5b (strain L20).